Consider the following 375-residue polypeptide: Succinyl-diaminopimelate desuccinylase (375 aa).

Histidine 66 is a Zn(2+) binding site. Aspartate 68 is an active-site residue. Residue aspartate 99 participates in Zn(2+) binding. Glutamate 133 serves as the catalytic Proton acceptor. Glutamate 134, glutamate 162, and histidine 348 together coordinate Zn(2+).

The protein belongs to the peptidase M20A family. DapE subfamily. Homodimer. Zn(2+) serves as cofactor. It depends on Co(2+) as a cofactor.

The catalysed reaction is N-succinyl-(2S,6S)-2,6-diaminopimelate + H2O = (2S,6S)-2,6-diaminopimelate + succinate. The protein operates within amino-acid biosynthesis; L-lysine biosynthesis via DAP pathway; LL-2,6-diaminopimelate from (S)-tetrahydrodipicolinate (succinylase route): step 3/3. Functionally, catalyzes the hydrolysis of N-succinyl-L,L-diaminopimelic acid (SDAP), forming succinate and LL-2,6-diaminopimelate (DAP), an intermediate involved in the bacterial biosynthesis of lysine and meso-diaminopimelic acid, an essential component of bacterial cell walls. This Teredinibacter turnerae (strain ATCC 39867 / T7901) protein is Succinyl-diaminopimelate desuccinylase.